The sequence spans 255 residues: Ditrans,polycis-undecaprenyl-diphosphate synthase ((2E,6E)-farnesyl-diphosphate specific) (255 aa).

Asp-21 is a catalytic residue. Mg(2+) is bound at residue Asp-21. Substrate-binding positions include 22-25 (GNGR), Trp-26, Arg-34, His-38, and 66-68 (SSE). The active-site Proton acceptor is Asn-69. Residues Trp-70, Arg-72, Arg-189, and 195 to 197 (RIS) contribute to the substrate site. Residue Glu-208 participates in Mg(2+) binding.

The protein belongs to the UPP synthase family. In terms of assembly, homodimer. It depends on Mg(2+) as a cofactor.

It catalyses the reaction 8 isopentenyl diphosphate + (2E,6E)-farnesyl diphosphate = di-trans,octa-cis-undecaprenyl diphosphate + 8 diphosphate. Functionally, catalyzes the sequential condensation of isopentenyl diphosphate (IPP) with (2E,6E)-farnesyl diphosphate (E,E-FPP) to yield (2Z,6Z,10Z,14Z,18Z,22Z,26Z,30Z,34E,38E)-undecaprenyl diphosphate (di-trans,octa-cis-UPP). UPP is the precursor of glycosyl carrier lipid in the biosynthesis of bacterial cell wall polysaccharide components such as peptidoglycan and lipopolysaccharide. The protein is Ditrans,polycis-undecaprenyl-diphosphate synthase ((2E,6E)-farnesyl-diphosphate specific) of Xylella fastidiosa (strain 9a5c).